A 63-amino-acid chain; its full sequence is uncharacterized protein (63 aa).

Residues 1–15 (MRNPVVWGMIYFAVG) form the signal peptide. The N-palmitoyl cysteine moiety is linked to residue cysteine 16. Cysteine 16 carries S-diacylglycerol cysteine lipidation. The chain crosses the membrane as a helical span at residues 34 to 56 (SILLMVFAAYNISISFKMFAFSF).

It localises to the cell membrane. This is an uncharacterized protein from Bacillus subtilis (strain 168).